The following is a 1371-amino-acid chain: uncharacterized protein (1371 aa).

Residues 1020–1048 (WYLSSSKNTPEPRPDPEPTPEGHDNNLRP) are disordered. Over residues 1029-1046 (PEPRPDPEPTPEGHDNNL) the composition is skewed to basic and acidic residues. The 289-residue stretch at 1083–1371 (GEPKATSMWM…SAMLGVKYTF (289 aa)) folds into the Autotransporter domain.

It is found in the cell outer membrane. This is an uncharacterized protein from Escherichia coli (strain K12).